A 428-amino-acid chain; its full sequence is Histidine--tRNA ligase (428 aa).

It belongs to the class-II aminoacyl-tRNA synthetase family. In terms of assembly, homodimer.

The protein resides in the cytoplasm. It catalyses the reaction tRNA(His) + L-histidine + ATP = L-histidyl-tRNA(His) + AMP + diphosphate + H(+). This is Histidine--tRNA ligase from Mesomycoplasma hyopneumoniae (strain 7448) (Mycoplasma hyopneumoniae).